Here is a 480-residue protein sequence, read N- to C-terminus: UDP-glucose 6-dehydrogenase 5 (480 aa).

Residues 8–13 (GAGYVG), aspartate 33, arginine 38, 86–90 (VNTPT), 127–128 (ST), and glutamate 161 each bind NAD(+). Substrate-binding positions include 157-161 (EFLAE), 216-223 (KLAANAFL), and 256-269 (RIGP…VGFG). The active-site Nucleophile is the cysteine 272. 272–275 (CFQK) is an NAD(+) binding site. 334–335 (FK) lines the substrate pocket. Arginine 342 is a binding site for NAD(+). Serine 393 is modified (phosphoserine). Residue arginine 447 participates in substrate binding.

Belongs to the UDP-glucose/GDP-mannose dehydrogenase family.

It carries out the reaction UDP-alpha-D-glucose + 2 NAD(+) + H2O = UDP-alpha-D-glucuronate + 2 NADH + 3 H(+). It functions in the pathway nucleotide-sugar biosynthesis; UDP-alpha-D-glucuronate biosynthesis; UDP-alpha-D-glucuronate from UDP-alpha-D-glucose: step 1/1. Its function is as follows. Involved in the biosynthesis of UDP-glucuronic acid (UDP-GlcA), providing nucleotide sugars for cell-wall polymers. This Oryza sativa subsp. japonica (Rice) protein is UDP-glucose 6-dehydrogenase 5 (UGD5).